A 703-amino-acid polypeptide reads, in one-letter code: Zinc finger protein 750 (703 aa).

Residues tyrosine 25–asparagine 51 form a CCHC-type zinc finger. Zn(2+) contacts are provided by cysteine 27, cysteine 30, histidine 43, and cysteine 49. 4 disordered regions span residues lysine 64–glutamate 113, proline 350–methionine 527, tryptophan 553–alanine 614, and arginine 630–serine 703. Positions lysine 67–serine 106 are enriched in polar residues. Positions serine 352–serine 361 are enriched in low complexity. The segment covering threonine 367–methionine 394 has biased composition (basic and acidic residues). 2 stretches are compositionally biased toward polar residues: residues serine 410–phenylalanine 421 and glycine 456–alanine 477. Residues threonine 574 to lysine 611 are compositionally biased toward basic and acidic residues. Residues glutamine 639–leucine 655 show a composition bias toward polar residues.

Its subcellular location is the nucleus. In terms of biological role, transcription factor involved in epidermis differentiation. Required for terminal epidermal differentiation: acts downstream of p63/TP63 and activates expression of late epidermal differentiation genes. Specifically binds to the promoter of KLF4 and promotes its expression. In Mus musculus (Mouse), this protein is Zinc finger protein 750 (Znf750).